We begin with the raw amino-acid sequence, 297 residues long: Ribosomal RNA small subunit methyltransferase H (297 aa).

S-adenosyl-L-methionine contacts are provided by residues 37 to 39 (GGH), E56, F87, D102, and H109.

It belongs to the methyltransferase superfamily. RsmH family.

It localises to the cytoplasm. It carries out the reaction cytidine(1402) in 16S rRNA + S-adenosyl-L-methionine = N(4)-methylcytidine(1402) in 16S rRNA + S-adenosyl-L-homocysteine + H(+). Functionally, specifically methylates the N4 position of cytidine in position 1402 (C1402) of 16S rRNA. The protein is Ribosomal RNA small subunit methyltransferase H of Borrelia duttonii (strain Ly).